The primary structure comprises 433 residues: 23S rRNA (uracil(1939)-C(5))-methyltransferase RlmD (433 aa).

Positions 1–53 (MPTAVIESLDHEGRGIARVEGKAVFIEGGLPGETVEYRVLRSKPNYEQAEATR) constitute a TRAM domain. 4 residues coordinate [4Fe-4S] cluster: Cys-66, Cys-72, Cys-75, and Cys-154. S-adenosyl-L-methionine-binding residues include Gln-263, Phe-292, Asn-297, Glu-313, Asn-341, and Asp-362. Cys-389 functions as the Nucleophile in the catalytic mechanism.

The protein belongs to the class I-like SAM-binding methyltransferase superfamily. RNA M5U methyltransferase family. RlmD subfamily.

The catalysed reaction is uridine(1939) in 23S rRNA + S-adenosyl-L-methionine = 5-methyluridine(1939) in 23S rRNA + S-adenosyl-L-homocysteine + H(+). In terms of biological role, catalyzes the formation of 5-methyl-uridine at position 1939 (m5U1939) in 23S rRNA. This Azoarcus sp. (strain BH72) protein is 23S rRNA (uracil(1939)-C(5))-methyltransferase RlmD.